The sequence spans 190 residues: Glutathione peroxidase 2 (190 aa).

Sec-40 is an active-site residue. Residue Sec-40 is a non-standard amino acid, selenocysteine.

It belongs to the glutathione peroxidase family. As to quaternary structure, homotetramer.

The protein localises to the cytoplasm. The protein resides in the cytosol. The catalysed reaction is 2 glutathione + H2O2 = glutathione disulfide + 2 H2O. The enzyme catalyses a hydroperoxy polyunsaturated fatty acid + 2 glutathione = a hydroxy polyunsaturated fatty acid + glutathione disulfide + H2O. It carries out the reaction tert-butyl hydroperoxide + 2 glutathione = tert-butanol + glutathione disulfide + H2O. It catalyses the reaction cumene hydroperoxide + 2 glutathione = 2-phenylpropan-2-ol + glutathione disulfide + H2O. The catalysed reaction is (13S)-hydroperoxy-(9Z,11E)-octadecadienoate + 2 glutathione = (13S)-hydroxy-(9Z,11E)-octadecadienoate + glutathione disulfide + H2O. The enzyme catalyses (5S)-hydroperoxy-(6E,8Z,11Z,14Z)-eicosatetraenoate + 2 glutathione = (5S)-hydroxy-(6E,8Z,11Z,14Z)-eicosatetraenoate + glutathione disulfide + H2O. It carries out the reaction (12R)-hydroperoxy-(5Z,8Z,10E,14Z)-eicosatetraenoate + 2 glutathione = (12R)-hydroxy-(5Z,8Z,10E,14Z)-eicosatetraenoate + glutathione disulfide + H2O. It catalyses the reaction (15S)-hydroperoxy-(5Z,8Z,11Z,13E)-eicosatetraenoate + 2 glutathione = (15S)-hydroxy-(5Z,8Z,11Z,13E)-eicosatetraenoate + glutathione disulfide + H2O. Functionally, catalyzes the reduction of hydroperoxides in a glutathione-dependent manner thus regulating cellular redox homeostasis. Can reduce small soluble hydroperoxides such as H2O2, cumene hydroperoxide and tert-butyl hydroperoxide, as well as several fatty acid-derived hydroperoxides. Cannot reduce phosphatidycholine hydroperoxide. In Sapajus apella (Brown-capped capuchin), this protein is Glutathione peroxidase 2 (GPX2).